The sequence spans 256 residues: Ribonuclease HII (256 aa).

Positions 67–255 constitute an RNase H type-2 domain; the sequence is QLVGGVDEVG…VSEMVGLKKA (189 aa). Residues Asp73, Glu74, and Asp165 each coordinate a divalent metal cation.

This sequence belongs to the RNase HII family. Requires Mn(2+) as cofactor. Mg(2+) serves as cofactor.

It is found in the cytoplasm. The catalysed reaction is Endonucleolytic cleavage to 5'-phosphomonoester.. Functionally, endonuclease that specifically degrades the RNA of RNA-DNA hybrids. The polypeptide is Ribonuclease HII (Lactobacillus delbrueckii subsp. bulgaricus (strain ATCC 11842 / DSM 20081 / BCRC 10696 / JCM 1002 / NBRC 13953 / NCIMB 11778 / NCTC 12712 / WDCM 00102 / Lb 14)).